The chain runs to 423 residues: UDP-N-acetylglucosamine 1-carboxyvinyltransferase (423 aa).

22-23 (KN) serves as a coordination point for phosphoenolpyruvate. Residue Arg-93 coordinates UDP-N-acetyl-alpha-D-glucosamine. The active-site Proton donor is Cys-117. Cys-117 carries the 2-(S-cysteinyl)pyruvic acid O-phosphothioketal modification. UDP-N-acetyl-alpha-D-glucosamine contacts are provided by residues 122–126 (RPVDL), Asp-308, and Ile-330.

Belongs to the EPSP synthase family. MurA subfamily.

It localises to the cytoplasm. It catalyses the reaction phosphoenolpyruvate + UDP-N-acetyl-alpha-D-glucosamine = UDP-N-acetyl-3-O-(1-carboxyvinyl)-alpha-D-glucosamine + phosphate. Its pathway is cell wall biogenesis; peptidoglycan biosynthesis. Its function is as follows. Cell wall formation. Adds enolpyruvyl to UDP-N-acetylglucosamine. The protein is UDP-N-acetylglucosamine 1-carboxyvinyltransferase of Maricaulis maris (strain MCS10) (Caulobacter maris).